Reading from the N-terminus, the 830-residue chain is Isethionate sulfite-lyase (830 aa).

Residues 31-700 (KRVFKLLERF…VVSATPNGRV (670 aa)) enclose the PFL domain. Residues Arg-189, Gln-193, 468 to 470 (CIE), and Arg-678 each bind 2-hydroxyethane-1-sulfonate. The active-site Cysteine radical intermediate is Cys-468. Glu-470 functions as the Proton acceptor in the catalytic mechanism. Residues 707–830 (DGSSPSHGAD…LIARTGHDQM (124 aa)) form the Glycine radical domain. A Glycine radical modification is found at Gly-805.

Belongs to the glycyl radical enzyme (GRE) family. In terms of assembly, homodimer. Requires the activating protein IslB to generate the key active site glycyl radical on Gly-805 that is involved in catalysis.

The catalysed reaction is 2-hydroxyethane-1-sulfonate = acetaldehyde + sulfite + H(+). The protein operates within organosulfur degradation; alkanesulfonate degradation. In terms of biological role, involved in an anaerobic respiration pathway that converts the sulfonate taurine (2-aminoethanesulfonate) to ammonia, acetate and sulfide. Catalyzes the radical-mediated C-S bond cleavage of isethionate (2-hydroxyethanesulfonate) to form sulfite and acetaldehyde. Is not able to use any alternate organosulfonate or (S)-1,2-propanediol or choline as a substrate, showing that this enzyme is highly specific for isethionate. The chain is Isethionate sulfite-lyase from Bilophila wadsworthia (strain 3_1_6).